We begin with the raw amino-acid sequence, 714 residues long: Transcription factor SFL2 (714 aa).

A DNA-binding region spans residues 15-134 (AFVHKLYTML…LVYIKRRSSS (120 aa)). 3 disordered regions span residues 187 to 467 (YYQQ…VGVT), 565 to 658 (STSV…NNTN), and 670 to 714 (SHSQ…NMNK). Composition is skewed to pro residues over residues 193–207 (GQVP…PPHQ) and 223–235 (QPPP…PPQP). The segment covering 266 to 275 (LDQTQPLSYT) has biased composition (polar residues). Residues 276-285 (PQLEYQQQQY) show a composition bias toward low complexity. Residues 286-296 (PQPPLPPPPPQ) are compositionally biased toward pro residues. Composition is skewed to polar residues over residues 310–321 (DNLSRPSPNEQH) and 354–372 (SEGS…LNNE). Over residues 376–389 (ESSTSSSSTTVTST) the composition is skewed to low complexity. 2 stretches are compositionally biased toward polar residues: residues 413–435 (SRMN…TQNG) and 444–461 (LIPS…TGTD). Over residues 574–591 (GPFSTSTSTSTTSPTLSS) the composition is skewed to low complexity. A compositionally biased stretch (polar residues) spans 599–608 (EPQNSTIANG). 2 stretches are compositionally biased toward low complexity: residues 609 to 641 (TSIR…RQLS) and 648 to 658 (QQQQQPNNNTN). The span at 703–714 (SKSDDDTDNMNK) shows a compositional bias: basic and acidic residues.

Belongs to the HSF family.

The protein localises to the nucleus. In terms of biological role, transcription factor that plays a role of activator of filamentous growth and which is involved in invasive growth at a high temperature. Required for human oral epithelium colonization and damage. Promotes filamentous growth in EFG1- and FLO8-dependent manners. Antagonizes functions of SFL1. This is Transcription factor SFL2 (SFL2) from Candida albicans (strain SC5314 / ATCC MYA-2876) (Yeast).